Here is a 688-residue protein sequence, read N- to C-terminus: Sciellin (688 aa).

A compositionally biased stretch (polar residues) spans 1–25 (MSNVTLRKMSPTGNEMKSTTQGTTR). A disordered region spans residues 1–29 (MSNVTLRKMSPTGNEMKSTTQGTTRKQQD). An N6-acetyllysine modification is found at lysine 83. The segment at 134–231 (QPGGSLNANT…TNRSAERNIR (98 aa)) is disordered. Residues 140 to 154 (NANTSNTIASTSATT) show a composition bias toward low complexity. Over residues 186-195 (VHPPIPPKPS) the composition is skewed to pro residues. 16 consecutive repeat copies span residues 251–266 (GEEL…SLNR), 267–286 (NQGL…REKR), 287–306 (AKSL…DGKG), 307–326 (IQSL…NEKG), 327–346 (RQNL…TSRR), 347–366 (SEDL…NTTG), 367–386 (KKDL…NITR), 387–406 (GQSL…SNQG), 407–426 (SKDL…STEG), 427–446 (GQSL…TNQG), 447–465 (NQDL…KSSE), 466–484 (QGLD…NTDG), 485–504 (KQDL…NNQR), 505–523 (NQDL…RNNQ), 524–543 (SQDL…NTNR), and 544–563 (DQNL…NKNG). The interval 251–563 (GEELDNLIKM…NSHVSENKNG (313 aa)) is 16 X approximate tandem repeats. Residue serine 289 is modified to Phosphoserine. A disordered region spans residues 340–373 (MNKTSRRSEDLDNATEVNPKGHENTTGKKDLDGL). Positions 358–373 (PKGHENTTGKKDLDGL) are enriched in basic and acidic residues. Residue serine 389 is modified to Phosphoserine. The 67-residue stretch at 619-685 (DMCTYCRKPL…EPCYSKIMAK (67 aa)) folds into the LIM zinc-binding domain.

Highly expressed in esophagus. It is also expressed in keratinocytes, amniotic tissue, foreskin stratum spinosum and stratum granulosum, hair follicle and nail.

The protein localises to the cytoplasm. It is found in the membrane. Functionally, may function in the assembly or regulation of proteins in the cornified envelope. The LIM domain may be involved in homotypic or heterotypic associations and may function to localize sciellin to the cornified envelope. The polypeptide is Sciellin (SCEL) (Homo sapiens (Human)).